Reading from the N-terminus, the 129-residue chain is Small ribosomal subunit protein uS11c (129 aa).

This sequence belongs to the universal ribosomal protein uS11 family. Part of the 30S ribosomal subunit.

The protein resides in the plastid. It is found in the chloroplast. The protein is Small ribosomal subunit protein uS11c of Rhodomonas salina (Cryptomonas salina).